We begin with the raw amino-acid sequence, 122 residues long: Large ribosomal subunit protein bL17 (122 aa).

It belongs to the bacterial ribosomal protein bL17 family. Part of the 50S ribosomal subunit. Contacts protein L32.

The sequence is that of Large ribosomal subunit protein bL17 from Staphylococcus epidermidis (strain ATCC 35984 / DSM 28319 / BCRC 17069 / CCUG 31568 / BM 3577 / RP62A).